The primary structure comprises 604 residues: Protein TAX4 (604 aa).

Disordered regions lie at residues 38 to 77 (HPNG…PRSI), 133 to 249 (FSNR…RQQE), 267 to 300 (GTLP…QENL), 338 to 380 (DETF…KGLK), and 394 to 428 (PFPH…NEDK). The segment covering 176–185 (YDNNVRSRSI) has biased composition (polar residues). 2 stretches are compositionally biased toward low complexity: residues 186–203 (SPQV…SISS) and 224–240 (SMSS…KASL). 3 stretches are compositionally biased toward basic residues: residues 276 to 290 (SQRK…HKLL), 366 to 379 (KKKK…KKGL), and 396 to 421 (PHHH…HTSS). Positions 469-559 (ANEDDESHLQ…RVWNSVDGYV (91 aa)) constitute an EH domain.

The protein belongs to the IRS4 family. In terms of assembly, interacts with INP51.

Functionally, with IRS4, acts as a positive regulator of INP51 activity and phosphatidylinositol 4,5-bisphosphate turnover. Negatively regulates signaling through the cell integrity pathway, including the MAP kinase SLT2. In Saccharomyces cerevisiae (strain YJM789) (Baker's yeast), this protein is Protein TAX4 (TAX4).